The chain runs to 339 residues: Glycerol-3-phosphate dehydrogenase [NAD(P)+] (339 aa).

Ser-15, Tyr-16, His-36, and Lys-110 together coordinate NADPH. Sn-glycerol 3-phosphate contacts are provided by Lys-110, Gly-139, and Thr-141. Ala-143 is an NADPH binding site. Residues Lys-195, Asp-248, Ser-258, Arg-259, and Asn-260 each contribute to the sn-glycerol 3-phosphate site. Lys-195 (proton acceptor) is an active-site residue. Position 259 (Arg-259) interacts with NADPH. Residues Val-283 and Glu-285 each coordinate NADPH.

Belongs to the NAD-dependent glycerol-3-phosphate dehydrogenase family.

It localises to the cytoplasm. It carries out the reaction sn-glycerol 3-phosphate + NAD(+) = dihydroxyacetone phosphate + NADH + H(+). The enzyme catalyses sn-glycerol 3-phosphate + NADP(+) = dihydroxyacetone phosphate + NADPH + H(+). It participates in membrane lipid metabolism; glycerophospholipid metabolism. In terms of biological role, catalyzes the reduction of the glycolytic intermediate dihydroxyacetone phosphate (DHAP) to sn-glycerol 3-phosphate (G3P), the key precursor for phospholipid synthesis. The polypeptide is Glycerol-3-phosphate dehydrogenase [NAD(P)+] (Shigella boydii serotype 18 (strain CDC 3083-94 / BS512)).